The following is a 371-amino-acid chain: Neutral protease 2 homolog MGYG_03465 (371 aa).

The N-terminal stretch at 1–19 (MQFVAVLAALGALVAPAAA) is a signal peptide. The propeptide occupies 20–188 (YPHAPMNETL…SIHARALEKR (169 aa)). 2 disulfides stabilise this stretch: Cys196-Cys267 and Cys274-Cys292. Residue His316 participates in Zn(2+) binding. Glu317 is a catalytic residue. Zn(2+)-binding residues include His320 and Asp331.

Belongs to the peptidase M35 family. It depends on Zn(2+) as a cofactor.

The protein resides in the secreted. It catalyses the reaction Preferential cleavage of bonds with hydrophobic residues in P1'. Also 3-Asn-|-Gln-4 and 8-Gly-|-Ser-9 bonds in insulin B chain.. In terms of biological role, secreted metalloproteinase that allows assimilation of proteinaceous substrates. Shows high activities on basic nuclear substrates such as histone and protamine. May be involved in virulence. The chain is Neutral protease 2 homolog MGYG_03465 from Arthroderma gypseum (strain ATCC MYA-4604 / CBS 118893) (Microsporum gypseum).